The following is a 359-amino-acid chain: Phosphoserine aminotransferase (359 aa).

R41 lines the L-glutamate pocket. Residues W101, T151, D170, and Q193 each contribute to the pyridoxal 5'-phosphate site. Residue K194 is modified to N6-(pyridoxal phosphate)lysine. A pyridoxal 5'-phosphate-binding site is contributed by 235-236 (NT).

Belongs to the class-V pyridoxal-phosphate-dependent aminotransferase family. SerC subfamily. As to quaternary structure, homodimer. Pyridoxal 5'-phosphate serves as cofactor.

Its subcellular location is the cytoplasm. The enzyme catalyses O-phospho-L-serine + 2-oxoglutarate = 3-phosphooxypyruvate + L-glutamate. It catalyses the reaction 4-(phosphooxy)-L-threonine + 2-oxoglutarate = (R)-3-hydroxy-2-oxo-4-phosphooxybutanoate + L-glutamate. It functions in the pathway amino-acid biosynthesis; L-serine biosynthesis; L-serine from 3-phospho-D-glycerate: step 2/3. It participates in cofactor biosynthesis; pyridoxine 5'-phosphate biosynthesis; pyridoxine 5'-phosphate from D-erythrose 4-phosphate: step 3/5. Functionally, catalyzes the reversible conversion of 3-phosphohydroxypyruvate to phosphoserine and of 3-hydroxy-2-oxo-4-phosphonooxybutanoate to phosphohydroxythreonine. This is Phosphoserine aminotransferase from Laribacter hongkongensis (strain HLHK9).